The chain runs to 306 residues: Secretory carrier-associated membrane protein 1 (306 aa).

The tract at residues 1–66 (MAGRYDSNPF…LPPEPAAFGA (66 aa)) is disordered. Residues 1-141 (MAGRYDSNPF…EIPSHLQRMQ (141 aa)) are Cytoplasmic-facing. Residues 25–36 (KAGGQPSYGGGA) are compositionally biased toward gly residues. The segment covering 40 to 55 (PNPRNVPSVSSNSRLS) has biased composition (low complexity). Residues 72 to 109 (LDSSKDLKNREKELQAREAELNKREKELKRREEAAARA) adopt a coiled-coil conformation. A run of 4 helical transmembrane segments spans residues 142–162 (YVAFASFLGLACCLFWNVIAV), 174–194 (IWLLAIIYFISGVPGAYVLWY), 209–229 (FGLFFLVYLFHILFCVFSAVA), and 257–277 (IFYFVGFGLFCVESLLSIWVI). Residues 278 to 306 (QQVYMYFRGSGKAAEMKRDATRGAMRAAF) are Cytoplasmic-facing.

Belongs to the SCAMP family.

Its subcellular location is the cell membrane. The protein localises to the cytoplasmic vesicle. It is found in the secretory vesicle membrane. Probably involved in membrane trafficking. This Oryza sativa subsp. japonica (Rice) protein is Secretory carrier-associated membrane protein 1 (SCAMP1).